The sequence spans 255 residues: Small ribosomal subunit protein eS1 (255 aa).

A2 is modified (N-acetylalanine; partial).

It belongs to the eukaryotic ribosomal protein eS1 family. In terms of assembly, component of the small ribosomal subunit. Mature ribosomes consist of a small (40S) and a large (60S) subunit. The 40S subunit contains about 33 different proteins and 1 molecule of RNA (18S). The 60S subunit contains about 49 different proteins and 3 molecules of RNA (25S, 5.8S and 5S).

The protein localises to the cytoplasm. The sequence is that of Small ribosomal subunit protein eS1 from Candida glabrata (strain ATCC 2001 / BCRC 20586 / JCM 3761 / NBRC 0622 / NRRL Y-65 / CBS 138) (Yeast).